Reading from the N-terminus, the 179-residue chain is Inner membrane-spanning protein YciB (179 aa).

5 consecutive transmembrane segments (helical) span residues Ile22–Val42, Met50–Asn70, Trp76–Met96, Leu121–Leu141, and Phe149–Ile169.

It belongs to the YciB family.

Its subcellular location is the cell inner membrane. Its function is as follows. Plays a role in cell envelope biogenesis, maintenance of cell envelope integrity and membrane homeostasis. The polypeptide is Inner membrane-spanning protein YciB (Salmonella arizonae (strain ATCC BAA-731 / CDC346-86 / RSK2980)).